The chain runs to 274 residues: Kit ligand (274 aa).

A signal peptide spans 1-25 (MKKTQTWIITCIYLQLLLFNPLVRT). Gln-26 bears the Pyrrolidone carboxylic acid mark. At 26–215 (QGICRNRVTD…SDSIEDSSLQ (190 aa)) the chain is on the extracellular side. Cystine bridges form between Cys-29-Cys-114 and Cys-68-Cys-164. N-linked (GlcNAc...) asparagine glycans are attached at residues Asn-90, Asn-97, Asn-145, and Asn-196. The chain crosses the membrane as a helical span at residues 216 to 238 (WAAVALPAFFSLVIGFAFGALYW). Topologically, residues 239–274 (KKKQPNLTRTVENIQINEEDNEISMLQEKEREFQEV) are cytoplasmic.

It belongs to the SCF family. Homodimer, non-covalently linked. Heterotetramer with KIT, binding two KIT molecules; thereby mediates KIT dimerization and subsequent activation by autophosphorylation. In terms of processing, a soluble form is produced by proteolytic processing of the extracellular domain.

It localises to the cytoplasm. It is found in the cytoskeleton. The protein localises to the cell membrane. The protein resides in the cell projection. Its subcellular location is the lamellipodium. It localises to the filopodium. It is found in the secreted. Ligand for the receptor-type protein-tyrosine kinase KIT. Plays an essential role in the regulation of cell survival and proliferation, hematopoiesis, stem cell maintenance, gametogenesis, mast cell development, migration and function, and in melanogenesis. KITLG/SCF binding can activate several signaling pathways. Promotes phosphorylation of PIK3R1, the regulatory subunit of phosphatidylinositol 3-kinase, and subsequent activation of the kinase AKT1. KITLG/SCF and KIT also transmit signals via GRB2 and activation of RAS, RAF1 and the MAP kinases MAPK1/ERK2 and/or MAPK3/ERK1. KITLG/SCF and KIT promote activation of STAT family members STAT1, STAT3 and STAT5. KITLG/SCF and KIT promote activation of PLCG1, leading to the production of the cellular signaling molecules diacylglycerol and inositol 1,4,5-trisphosphate. KITLG/SCF acts synergistically with other cytokines, probably interleukins. The protein is Kit ligand (KITLG) of Sus scrofa (Pig).